A 332-amino-acid chain; its full sequence is L-lactate dehydrogenase A chain (332 aa).

NAD(+) contacts are provided by residues 29–57 (GAVG…VEDK) and R99. The substrate site is built by R106, N138, and R169. N138 contributes to the NAD(+) binding site. H193 (proton acceptor) is an active-site residue. T248 is a binding site for substrate.

It belongs to the LDH/MDH superfamily. LDH family. In terms of assembly, homotetramer.

The protein localises to the cytoplasm. It catalyses the reaction (S)-lactate + NAD(+) = pyruvate + NADH + H(+). The protein operates within fermentation; pyruvate fermentation to lactate; (S)-lactate from pyruvate: step 1/1. Its function is as follows. Interconverts simultaneously and stereospecifically pyruvate and lactate with concomitant interconversion of NADH and NAD(+). The sequence is that of L-lactate dehydrogenase A chain (LDHA) from Alligator mississippiensis (American alligator).